We begin with the raw amino-acid sequence, 210 residues long: Imidazole glycerol phosphate synthase subunit HisH (210 aa).

The Glutamine amidotransferase type-1 domain occupies 3-210; that stretch reads KVALLDYGSG…QLLRNWIDLL (208 aa). The active-site Nucleophile is Cys-81. Active-site residues include His-191 and Glu-193.

As to quaternary structure, heterodimer of HisH and HisF.

It localises to the cytoplasm. The catalysed reaction is 5-[(5-phospho-1-deoxy-D-ribulos-1-ylimino)methylamino]-1-(5-phospho-beta-D-ribosyl)imidazole-4-carboxamide + L-glutamine = D-erythro-1-(imidazol-4-yl)glycerol 3-phosphate + 5-amino-1-(5-phospho-beta-D-ribosyl)imidazole-4-carboxamide + L-glutamate + H(+). It carries out the reaction L-glutamine + H2O = L-glutamate + NH4(+). Its pathway is amino-acid biosynthesis; L-histidine biosynthesis; L-histidine from 5-phospho-alpha-D-ribose 1-diphosphate: step 5/9. Functionally, IGPS catalyzes the conversion of PRFAR and glutamine to IGP, AICAR and glutamate. The HisH subunit catalyzes the hydrolysis of glutamine to glutamate and ammonia as part of the synthesis of IGP and AICAR. The resulting ammonia molecule is channeled to the active site of HisF. The polypeptide is Imidazole glycerol phosphate synthase subunit HisH (Corynebacterium diphtheriae (strain ATCC 700971 / NCTC 13129 / Biotype gravis)).